Reading from the N-terminus, the 699-residue chain is MARKTPIEHYRNIGICAHVDAGKTTTTERILFYTGLSHKIGEVHDGAATMDWMEQEQERGITITSAATTTFWRGMEAQFPEHRVNIIDTPGHVDFTIEVERSLRVLDGAVVVFCGSSGVEPQSETVWRQADKYHVPRMVFVNKMDRAGADFLRVVDQIKNRLGANPVPIQLNVGAEEDFRGVIDLIKMKMINWNDADQGMSFTYEDIPADMIDLAEEWRNHMIESAAEASEELMDKYLEEGELTEAEIKQALRTRTLNNEIVLATCGSAFKNKGVQAVLDAVIEFLPSPSDVPAIKGVDEKDNEIERHADDNEPFSALAFKIATDPFVGTLTFMRVYSGVVNSGDAVYNSVKEKKERFGRIVQMHANKREEIKEVRAGDIAAAIGLKDVTTGDTLCDQSHKVILERMEFPEPVIQIAVEPRSKADQEKMGIALGKLAAEDPSFRVETDDETGQTLISGMGELHLDIIVDRMKREFSVDCNVGKPQVAYRETIRGKAEVEGKFVRQSGGRGQYGHVWVKLEPSEPGEGFVFVDEIVGGVIPKEYISSVAKGIEEQMNSGVLAGYPVLDIKATLFDGSYHDVDSSEMAFKIAGSMAFKKGALEAQPVILEPMMNVEVTTPEDWMGDVVGDLNRRRGMIEGMDEGVAGLKIIRAQVPLSEMFGYATDLRSATQGRASYSMEFNEYAEVPKNFADKIIAERGY.

A tr-type G domain is found at 8–290; the sequence is EHYRNIGICA…AVIEFLPSPS (283 aa). GTP is bound by residues 17–24, 88–92, and 142–145; these read AHVDAGKT, DTPGH, and NKMD.

The protein belongs to the TRAFAC class translation factor GTPase superfamily. Classic translation factor GTPase family. EF-G/EF-2 subfamily.

It is found in the cytoplasm. Its function is as follows. Catalyzes the GTP-dependent ribosomal translocation step during translation elongation. During this step, the ribosome changes from the pre-translocational (PRE) to the post-translocational (POST) state as the newly formed A-site-bound peptidyl-tRNA and P-site-bound deacylated tRNA move to the P and E sites, respectively. Catalyzes the coordinated movement of the two tRNA molecules, the mRNA and conformational changes in the ribosome. In Vibrio parahaemolyticus serotype O3:K6 (strain RIMD 2210633), this protein is Elongation factor G 1.